The chain runs to 154 residues: 17.6 kDa class I heat shock protein (154 aa).

The sHSP domain maps to 40 to 154; sequence ETSAFANTRI…PDVKSIEISG (115 aa).

It belongs to the small heat shock protein (HSP20) family. As to quaternary structure, forms oligomeric structures.

It localises to the cytoplasm. In Solanum peruvianum (Peruvian tomato), this protein is 17.6 kDa class I heat shock protein.